Here is a 294-residue protein sequence, read N- to C-terminus: UDP-3-O-acyl-N-acetylglucosamine deacetylase (294 aa).

Residues histidine 75, histidine 232, and aspartate 236 each contribute to the Zn(2+) site. Histidine 259 functions as the Proton donor in the catalytic mechanism.

It belongs to the LpxC family. Zn(2+) serves as cofactor.

It carries out the reaction a UDP-3-O-[(3R)-3-hydroxyacyl]-N-acetyl-alpha-D-glucosamine + H2O = a UDP-3-O-[(3R)-3-hydroxyacyl]-alpha-D-glucosamine + acetate. The protein operates within glycolipid biosynthesis; lipid IV(A) biosynthesis; lipid IV(A) from (3R)-3-hydroxytetradecanoyl-[acyl-carrier-protein] and UDP-N-acetyl-alpha-D-glucosamine: step 2/6. In terms of biological role, catalyzes the hydrolysis of UDP-3-O-myristoyl-N-acetylglucosamine to form UDP-3-O-myristoylglucosamine and acetate, the committed step in lipid A biosynthesis. This Campylobacter concisus (strain 13826) protein is UDP-3-O-acyl-N-acetylglucosamine deacetylase.